The following is a 499-amino-acid chain: Proline--tRNA ligase (499 aa).

Belongs to the class-II aminoacyl-tRNA synthetase family. ProS type 3 subfamily. As to quaternary structure, homodimer.

The protein localises to the cytoplasm. The enzyme catalyses tRNA(Pro) + L-proline + ATP = L-prolyl-tRNA(Pro) + AMP + diphosphate. Functionally, catalyzes the attachment of proline to tRNA(Pro) in a two-step reaction: proline is first activated by ATP to form Pro-AMP and then transferred to the acceptor end of tRNA(Pro). This is Proline--tRNA ligase from Bdellovibrio bacteriovorus (strain ATCC 15356 / DSM 50701 / NCIMB 9529 / HD100).